The primary structure comprises 508 residues: 2,3-bisphosphoglycerate-independent phosphoglycerate mutase (508 aa).

Positions 9 and 59 each coordinate Mn(2+). The Phosphoserine intermediate role is filled by Ser-59. Substrate contacts are provided by residues His-120, 149–150 (RD), Arg-181, Arg-187, 254–257 (RADR), and Lys-331. Positions 398, 402, 439, 440, and 456 each coordinate Mn(2+).

Belongs to the BPG-independent phosphoglycerate mutase family. Mn(2+) is required as a cofactor.

It carries out the reaction (2R)-2-phosphoglycerate = (2R)-3-phosphoglycerate. It participates in carbohydrate degradation; glycolysis; pyruvate from D-glyceraldehyde 3-phosphate: step 3/5. In terms of biological role, catalyzes the interconversion of 2-phosphoglycerate and 3-phosphoglycerate. The polypeptide is 2,3-bisphosphoglycerate-independent phosphoglycerate mutase (Halobacterium salinarum (strain ATCC 700922 / JCM 11081 / NRC-1) (Halobacterium halobium)).